Consider the following 252-residue polypeptide: Vacuolar-sorting protein dot2 (252 aa).

It belongs to the SNF8 family. In terms of assembly, component of the endosomal sorting complex required for transport II (ESCRT-II).

It localises to the cytoplasm. The protein resides in the nucleus. Its subcellular location is the endosome membrane. In terms of biological role, component of the endosomal sorting complex required for transport II (ESCRT-II), which is required for multivesicular body (MVB) formation and sorting of endosomal cargo proteins into MVBs. The MVB pathway mediates delivery of transmembrane proteins into the lumen of the lysosome for degradation. The ESCRT-II complex is probably involved in the recruitment of the ESCRT-III complex. Negatively regulates meiotic spindle pole body maturation via indirect regulation of the pcp1 gene. Required for efficient entry into pre-meiotic S phase. This Schizosaccharomyces pombe (strain 972 / ATCC 24843) (Fission yeast) protein is Vacuolar-sorting protein dot2 (dot2).